Here is a 520-residue protein sequence, read N- to C-terminus: Retinoic acid receptor RXR-beta (520 aa).

The interval 1–167 is disordered; it reads MSWATRPPFL…GGSGPPEDVK (167 aa). The interval 1-191 is modulating; it reads MSWATRPPFL…PGGPGAGKRL (191 aa). Arg25 is subject to Omega-N-methylarginine. Over residues 64-79 the composition is skewed to basic and acidic residues; the sequence is EAGRDGMGDSGRDSRS. The segment covering 95 to 118 has biased composition (pro residues); it reads SSPPGPPLTPSAPPPPMPPPPLGS. Positions 119 to 130 are enriched in low complexity; the sequence is PFPVISSSMGSP. Over residues 131–140 the composition is skewed to pro residues; the sequence is GLPPPAPPGF. NR C4-type zinc fingers lie at residues 192–212 and 228–252; these read CAIC…CEGC and CRDN…YQKC. Positions 192 to 257 form a DNA-binding region, nuclear receptor; that stretch reads CAICGDRSSG…RYQKCLATGM (66 aa). Positions 258 to 382 are hinge; the sequence is KREAVQEERQ…HRSIDVRDGI (125 aa). The span at 263–275 shows a compositional bias: basic and acidic residues; that stretch reads QEERQRGKDKDGD. Disordered stretches follow at residues 263 to 285 and 300 to 323; these read QEER…APEE and QKSD…NDPV. The 234-residue stretch at 283-516 folds into the NR LBD domain; that stretch reads PEEMPVDRIL…TFLMEMLEAP (234 aa). A compositionally biased stretch (gly residues) spans 307–317; the sequence is EGPGATGGGGS.

Belongs to the nuclear hormone receptor family. NR2 subfamily. Homodimer (in vitro). Heterodimer with other retinoic acid receptor family members. Binds DNA preferentially as a RAR/RXR heterodimer. Interacts with NR1H3. Interacts with AKAP13. In all tissues tested, including brain, thymus, spleen and liver.

It localises to the nucleus. The protein resides in the cytoplasm. In terms of biological role, receptor for retinoic acid. Retinoic acid receptors bind as heterodimers to their target response elements in response to their ligands, all-trans or 9-cis retinoic acid, and regulate gene expression in various biological processes. The RAR/RXR heterodimers bind to the retinoic acid response elements (RARE). This is Retinoic acid receptor RXR-beta (Rxrb) from Mus musculus (Mouse).